The following is a 380-amino-acid chain: Cytochrome b (380 aa).

The next 4 membrane-spanning stretches (helical) occupy residues F34–M54, W78–I99, W114–L134, and F179–T199. Residues H84 and H98 each contribute to the heme b site. The heme b site is built by H183 and H197. Residue H202 coordinates a ubiquinone. The next 4 helical transmembrane spans lie at L227–S247, L289–H309, I321–S341, and F348–P368.

Belongs to the cytochrome b family. In terms of assembly, the cytochrome bc1 complex contains 11 subunits: 3 respiratory subunits (MT-CYB, CYC1 and UQCRFS1), 2 core proteins (UQCRC1 and UQCRC2) and 6 low-molecular weight proteins (UQCRH/QCR6, UQCRB/QCR7, UQCRQ/QCR8, UQCR10/QCR9, UQCR11/QCR10 and a cleavage product of UQCRFS1). This cytochrome bc1 complex then forms a dimer. It depends on heme b as a cofactor.

Its subcellular location is the mitochondrion inner membrane. Component of the ubiquinol-cytochrome c reductase complex (complex III or cytochrome b-c1 complex) that is part of the mitochondrial respiratory chain. The b-c1 complex mediates electron transfer from ubiquinol to cytochrome c. Contributes to the generation of a proton gradient across the mitochondrial membrane that is then used for ATP synthesis. This Pelecanoides urinatrix (Common diving petrel) protein is Cytochrome b (MT-CYB).